The sequence spans 44 residues: Photosystem I reaction center subunit IX (44 aa).

The helical transmembrane segment at 7 to 27 threads the bilayer; the sequence is YLSAAPVLSTIWFGALAGLLI.

This sequence belongs to the PsaJ family.

The protein localises to the plastid. Its subcellular location is the chloroplast thylakoid membrane. May help in the organization of the PsaE and PsaF subunits. This Pelargonium hortorum (Common geranium) protein is Photosystem I reaction center subunit IX.